The sequence spans 215 residues: Pyrrolidone-carboxylate peptidase (215 aa).

Active-site residues include Glu78, Cys141, and His165.

This sequence belongs to the peptidase C15 family. Homotetramer.

It is found in the cytoplasm. The enzyme catalyses Release of an N-terminal pyroglutamyl group from a polypeptide, the second amino acid generally not being Pro.. Functionally, removes 5-oxoproline from various penultimate amino acid residues except L-proline. The chain is Pyrrolidone-carboxylate peptidase from Streptococcus pyogenes serotype M18 (strain MGAS8232).